The sequence spans 456 residues: Phosphomannomutase (456 aa).

Ser98 serves as the catalytic Phosphoserine intermediate. Ser98, Asp245, Asp247, and Asp249 together coordinate Mg(2+).

It belongs to the phosphohexose mutase family. It depends on Mg(2+) as a cofactor.

It carries out the reaction alpha-D-mannose 1-phosphate = D-mannose 6-phosphate. The protein operates within nucleotide-sugar biosynthesis; GDP-alpha-D-mannose biosynthesis; alpha-D-mannose 1-phosphate from D-fructose 6-phosphate: step 2/2. It participates in bacterial outer membrane biogenesis; LPS O-antigen biosynthesis. Functionally, involved in GDP-mannose biosynthesis which serves as the activated sugar nucleotide precursor for mannose residues in cell surface polysaccharides. This enzyme participates in synthesis of the LPS O antigen. This is Phosphomannomutase (manB) from Salmonella montevideo.